Consider the following 491-residue polypeptide: Ketol-acid reductoisomerase (NADP(+)) (491 aa).

The KARI N-terminal Rossmann domain maps to 15–208; it reads AQLGKCRFMG…GGHRAGVLES (194 aa). NADP(+) is bound by residues 45–48, arginine 68, arginine 76, serine 78, and 108–110; these read CGAQ and DKQ. Histidine 132 is a catalytic residue. Glycine 158 is an NADP(+) binding site. 2 KARI C-terminal knotted domains span residues 209 to 344 and 345 to 484; these read SFVA…TAPQ and FEGK…MTDM. Mg(2+)-binding residues include aspartate 217, glutamate 221, glutamate 389, and glutamate 393. Serine 414 is a binding site for substrate.

This sequence belongs to the ketol-acid reductoisomerase family. Mg(2+) is required as a cofactor.

It catalyses the reaction (2R)-2,3-dihydroxy-3-methylbutanoate + NADP(+) = (2S)-2-acetolactate + NADPH + H(+). The catalysed reaction is (2R,3R)-2,3-dihydroxy-3-methylpentanoate + NADP(+) = (S)-2-ethyl-2-hydroxy-3-oxobutanoate + NADPH + H(+). It functions in the pathway amino-acid biosynthesis; L-isoleucine biosynthesis; L-isoleucine from 2-oxobutanoate: step 2/4. The protein operates within amino-acid biosynthesis; L-valine biosynthesis; L-valine from pyruvate: step 2/4. Its function is as follows. Involved in the biosynthesis of branched-chain amino acids (BCAA). Catalyzes an alkyl-migration followed by a ketol-acid reduction of (S)-2-acetolactate (S2AL) to yield (R)-2,3-dihydroxy-isovalerate. In the isomerase reaction, S2AL is rearranged via a Mg-dependent methyl migration to produce 3-hydroxy-3-methyl-2-ketobutyrate (HMKB). In the reductase reaction, this 2-ketoacid undergoes a metal-dependent reduction by NADPH to yield (R)-2,3-dihydroxy-isovalerate. This Salmonella heidelberg (strain SL476) protein is Ketol-acid reductoisomerase (NADP(+)).